The chain runs to 780 residues: Subtilisin-like protease SBT1.3 (780 aa).

Residues 1–25 (MANKNPLQKPFLFIILSINLIFLQA) form the signal peptide. The propeptide at 26 to 120 (ETTTQISTKK…VIPETRYELH (95 aa)) is activation peptide. One can recognise an Inhibitor I9 domain in the interval 36–120 (TYVIHMDKSA…VIPETRYELH (85 aa)). The Peptidase S8 domain maps to 116-628 (RYELHTTRSP…AGHIDPLRAT (513 aa)). The active-site Charge relay system is Asp-154. A glycan (N-linked (GlcNAc...) asparagine) is linked at Asn-165. Residue His-227 is the Charge relay system of the active site. The PA domain occupies 384–477 (KQYPLVYLGR…GEKEGKLIKQ (94 aa)). A glycan (N-linked (GlcNAc...) asparagine) is linked at Asn-394. Ser-560 (charge relay system) is an active-site residue. Asn-663 and Asn-731 each carry an N-linked (GlcNAc...) asparagine glycan.

The protein belongs to the peptidase S8 family.

The protein resides in the secreted. This is Subtilisin-like protease SBT1.3 from Arabidopsis thaliana (Mouse-ear cress).